The chain runs to 147 residues: Hemoglobin subunit epsilon (147 aa).

The Globin domain maps to 3 to 147; it reads HFTAEEKSTI…VATALAHKYH (145 aa). Residues Ser14 and Ser51 each carry the phosphoserine modification. 2 residues coordinate heme b: His64 and His93.

This sequence belongs to the globin family. As to quaternary structure, heterotetramer of two alpha chains and two epsilon chains in early embryonic hemoglobin Gower-2; two zeta chains and two epsilon chains in early embryonic hemoglobin Gower-1. Red blood cells.

The epsilon chain is a beta-type chain of early mammalian embryonic hemoglobin. The chain is Hemoglobin subunit epsilon (HBE1) from Cheirogaleus medius (Fat-tailed dwarf lemur).